Reading from the N-terminus, the 139-residue chain is Endoribonuclease YbeY (139 aa).

The Zn(2+) site is built by His110, His114, and His120.

This sequence belongs to the endoribonuclease YbeY family. Requires Zn(2+) as cofactor.

The protein localises to the cytoplasm. Functionally, single strand-specific metallo-endoribonuclease involved in late-stage 70S ribosome quality control and in maturation of the 3' terminus of the 16S rRNA. The chain is Endoribonuclease YbeY from Thermus thermophilus (strain ATCC BAA-163 / DSM 7039 / HB27).